The primary structure comprises 801 residues: Probable inorganic carbon transporter subunit DabA (801 aa).

Zn(2+) contacts are provided by Cys330, Asp332, His489, and Cys504.

Belongs to the inorganic carbon transporter (TC 9.A.2) DabA family. As to quaternary structure, forms a complex with DabB. Zn(2+) serves as cofactor.

Its subcellular location is the cell inner membrane. Its function is as follows. Part of an energy-coupled inorganic carbon pump. The sequence is that of Probable inorganic carbon transporter subunit DabA from Jannaschia sp. (strain CCS1).